The sequence spans 31 residues: Dermaseptin-7.1TR (31 aa).

The residue at position 31 (Q31) is a Glutamine amide.

Expressed by the skin glands.

Its subcellular location is the secreted. Has antimicrobial activity. In Phyllomedusa trinitatis (Trinidad leaf frog), this protein is Dermaseptin-7.1TR.